The sequence spans 257 residues: Imidazole glycerol phosphate synthase subunit HisF (257 aa).

Active-site residues include aspartate 12 and aspartate 131.

This sequence belongs to the HisA/HisF family. In terms of assembly, heterodimer of HisH and HisF.

It is found in the cytoplasm. The catalysed reaction is 5-[(5-phospho-1-deoxy-D-ribulos-1-ylimino)methylamino]-1-(5-phospho-beta-D-ribosyl)imidazole-4-carboxamide + L-glutamine = D-erythro-1-(imidazol-4-yl)glycerol 3-phosphate + 5-amino-1-(5-phospho-beta-D-ribosyl)imidazole-4-carboxamide + L-glutamate + H(+). It functions in the pathway amino-acid biosynthesis; L-histidine biosynthesis; L-histidine from 5-phospho-alpha-D-ribose 1-diphosphate: step 5/9. In terms of biological role, IGPS catalyzes the conversion of PRFAR and glutamine to IGP, AICAR and glutamate. The HisF subunit catalyzes the cyclization activity that produces IGP and AICAR from PRFAR using the ammonia provided by the HisH subunit. This chain is Imidazole glycerol phosphate synthase subunit HisF, found in Burkholderia ambifaria (strain MC40-6).